The chain runs to 274 residues: Putative HTH-type transcriptional regulator RmpR (274 aa).

The HTH gntR-type domain maps to isoleucine 18–glutamine 88. Residues glutamate 46–serine 65 constitute a DNA-binding region (H-T-H motif). A compositionally biased stretch (polar residues) spans serine 250–alanine 265. Residues serine 250–glutamine 274 are disordered.

May regulate the transcription of the rmpAB operon. The chain is Putative HTH-type transcriptional regulator RmpR (rmpR) from Mycobacterium gastri.